Consider the following 264-residue polypeptide: Short chain dehydrogenase/reductase dmxR18 (264 aa).

Residues Ile24, Asp70, Asn97, and Arg130 each contribute to the NADP(+) site. Residues Ser146 and Ser147 each act as proton donor in the active site. Residues Tyr161, Lys165, and Thr196 each contribute to the NADP(+) site. The active-site Proton acceptor is the Tyr161. Lys165 functions as the Lowers pKa of active site Tyr in the catalytic mechanism.

It belongs to the short-chain dehydrogenases/reductases (SDR) family.

The enzyme catalyses 3,8,9,10-tetrahydroxy-6-methyl-1,4-dihydroanthracen-1-one + NADPH + H(+) = (3R)-3,8,9,10-tetrahydroxy-6-methyl-1,2,3,4-tetrahydroanthracen-1-one + NADP(+). It participates in secondary metabolite biosynthesis. Functionally, short chain dehydrogenase/reductase; part of the gene cluster that mediates the biosynthesis of the dimeric xanthones cryptosporioptides. The pathway begins with the synthesis of atrochrysone thioester by the polyketide synthase dmx-nrPKS. The atrochrysone carboxyl ACP thioesterase dmxR1 then breaks the thioester bond and releases the atrochrysone carboxylic acid from dmx-nrPKS. Atrochrysone carboxylic acid is decarboxylated by the decarboxylase dmxR15, and oxidized by the anthrone oxygenase dmxR16 to yield emodin. Emodin is then reduced to emodin hydroquinone by the oxidoreductase dmxR7. A-ring reduction by the short chain dehydrogenase dmxR18, dehydration by the scytalone dehydratase-like protein dmxR17 and probable spontaneous re-oxidation, results in overall deoxygenation to chrysophanol. Baeyer-Villiger oxidation by the Baeyer-Villiger monooxygenase (BVMO) dmxR6 then yields monodictylactone in equilibrium with monodictyphenone. In the case of the cryptosporioptides biosynthesis, monodictylactone is reduced at C-12 to an alcohol (by the short chain dehydrogenases dmxR12 or dmxR8) and hydroxylated at C-5 by dmxR9, yielding the electron-rich aromatic which could eliminate H(2)O to form the ortho-quinonemethide, followed by tautomerisation to paraquinone and complete the formal reduction to produce the 10-methylgroup. Conjugate addition of C-4a-OH to the resulting paraquinone by the monooxygenase dmxR10 then gives cyclohexadienone, which is then reduced at C-5 by the short chain dehydrogenase dmxR3 to give the dihydroxanthone. The 6,7-epoxide in the cryptosporioptides could be introduced by the cytochrome P450 monooxygenase dmxL3. The highly reducing PKS dmxL2 manufactures butyrate, which is further carboxylated by dmxL1 to form ethylmalonate. It is not yet clear whether the carboxylation occurs while the butyrate is attached to the ACP of dmxL2, but this unusual fungal metabolite could then be esterified to O-5 by the O-acetyltransferase dmxR13. Finally, dimerization performed by dmxR5 gives the observed dimers cryptosporioptides A, B and C as the final products of the pathway. The chain is Short chain dehydrogenase/reductase dmxR18 from Cryptosporiopsis sp. (strain 8999).